A 285-amino-acid chain; its full sequence is Probable endonuclease 4 (285 aa).

Zn(2+) contacts are provided by His-69, His-109, Glu-145, Asp-179, His-182, His-216, Asp-229, His-231, and Glu-261.

The protein belongs to the AP endonuclease 2 family. Requires Zn(2+) as cofactor.

The catalysed reaction is Endonucleolytic cleavage to 5'-phosphooligonucleotide end-products.. Its function is as follows. Endonuclease IV plays a role in DNA repair. It cleaves phosphodiester bonds at apurinic or apyrimidinic (AP) sites, generating a 3'-hydroxyl group and a 5'-terminal sugar phosphate. This is Probable endonuclease 4 from Salmonella heidelberg (strain SL476).